The sequence spans 567 residues: Urease subunit alpha (567 aa).

Residues 129–567 form the Urease domain; that stretch reads GGIDVHVHFI…VPMSQRYFLF (439 aa). 3 residues coordinate Ni(2+): His134, His136, and Lys217. At Lys217 the chain carries N6-carboxylysine. His219 is a binding site for substrate. Ni(2+) contacts are provided by His246 and His272. Catalysis depends on His320, which acts as the Proton donor. Asp360 provides a ligand contact to Ni(2+).

This sequence belongs to the metallo-dependent hydrolases superfamily. Urease alpha subunit family. As to quaternary structure, heterotrimer of UreA (gamma), UreB (beta) and UreC (alpha) subunits. Three heterotrimers associate to form the active enzyme. It depends on Ni cation as a cofactor. Carboxylation allows a single lysine to coordinate two nickel ions.

The protein resides in the cytoplasm. The enzyme catalyses urea + 2 H2O + H(+) = hydrogencarbonate + 2 NH4(+). It functions in the pathway nitrogen metabolism; urea degradation; CO(2) and NH(3) from urea (urease route): step 1/1. The chain is Urease subunit alpha from Blochmanniella floridana.